Consider the following 981-residue polypeptide: Ubiquitin carboxyl-terminal hydrolase 37 (981 aa).

The KEN box 1 motif lies at 32-34; it reads KEN. Short sequence motifs (D-box) lie at residues 71-79 and 96-105; these read RLMLTLQDN and RLFLDAVHQN. Residues 111–306 form a disordered region; that stretch reads MKPSQGSGSF…TPSAKRSLGF (196 aa). Position 114 is a phosphoserine (S114). A compositionally biased stretch (polar residues) spans 135–148; sequence RQLSYSDNQVSSKR. The span at 149–159 shows a compositional bias: basic and acidic residues; that stretch reads GSLETKDDTPF. The D-box 3 signature appears at 160 to 168; it reads RKVLGNPSR. S170 carries the post-translational modification Phosphoserine. A compositionally biased stretch (low complexity) spans 183–200; sequence RTIPSLTSTSTPLRSGLL. S212 carries the phosphoserine modification. Residues 223–225 carry the KEN box 2 motif; the sequence is KEN. Residues 245-259 show a composition bias toward basic and acidic residues; sequence SREKQLSLKQSEENR. The span at 283 to 300 shows a compositional bias: polar residues; that stretch reads PGSTNLDRTNISSQTPSA. The region spanning 343-953 is the USP domain; that stretch reads QGFSNLGNTC…SGYIFFYMHK (611 aa). C352 acts as the Nucleophile in catalysis. S630 carries the phosphoserine; by CDK2 modification. Residues S652 and S654 each carry the phosphoserine modification. Disordered regions lie at residues 670–705 and 721–797; these read EMSGSEQQQEDLEKDSKSCRIEPDKSELENSGFDGM and EASP…GEVD. Composition is skewed to basic and acidic residues over residues 683–697 and 721–734; these read KDSKSCRIEPDKSEL and EASPSLSHEDDDKP. Positions 706–725 constitute a UIM 1 domain; the sequence is SEEELLAAVLEISKREASPS. S772 carries the phosphoserine modification. Residues 776-788 are compositionally biased toward basic and acidic residues; sequence ITKDCDENKENKT. The KEN box 3 signature appears at 784-786; that stretch reads KEN. UIM domains lie at 808–827 and 830–849; these read REEQELQQALAQSLQEQEAW and KEDDDLKRATELSLQEFNNS. Catalysis depends on H908, which acts as the Proton acceptor.

The protein belongs to the peptidase C19 family. As to quaternary structure, interacts with FZR1/CDH1. Interacts with CDT1. In terms of processing, polyubiquitinated via 'Lys-11'-linked ubiquitin by the APC(CDH1) complex during late mitosis, leading to its degradation. Able to mediate auto-deubiquitination. Phosphorylated at Ser-630 by CDK2 during G1/S phase but not during mitosis; phosphorylation at Ser-630 is required for deubiquitinase activity. Also polyubiquitinated during early G1 phase, without leading to degradation. Phosphorylated at Ser-114 by ATM following DNA damage, which in turn increases its deubiquitination activity towards BLM.

The protein localises to the nucleus. Its subcellular location is the chromosome. It carries out the reaction Thiol-dependent hydrolysis of ester, thioester, amide, peptide and isopeptide bonds formed by the C-terminal Gly of ubiquitin (a 76-residue protein attached to proteins as an intracellular targeting signal).. In terms of biological role, deubiquitinase that plays a role in different processes including cell cycle regulation, DNA replication or DNA damage response. Antagonizes the anaphase-promoting complex (APC/C) during G1/S transition by mediating deubiquitination of cyclin-A (CCNA1 and CCNA2), thereby promoting S phase entry. Specifically mediates deubiquitination of 'Lys-11'-linked polyubiquitin chains, a specific ubiquitin-linkage type mediated by the APC/C complex. Phosphorylation at Ser-628 during G1/S phase maximizes the deubiquitinase activity, leading to prevent degradation of cyclin-A (CCNA1 and CCNA2). Plays an important role in the regulation of DNA replication by stabilizing the licensing factor CDT1. Also plays an essential role beyond S-phase entry to promote the efficiency and fidelity of replication by deubiquitinating checkpoint kinase 1/CHK1, promoting its stability. Sustains the DNA damage response (DDR) by deubiquitinating and stabilizing the ATP-dependent DNA helicase BLM. Mechanistically, DNA double-strand breaks (DSB) promotes ATM-mediated phosphorylation of USP37 and enhances the binding between USP37 and BLM. Promotes cell migration by deubiquitinating and stabilizing the epithelial-mesenchymal transition (EMT)-inducing transcription factor SNAI. Plays a role in the regulation of mitotic spindle assembly and mitotic progression by associating with chromatin-associated WAPL and stabilizing it through deubiquitination. The sequence is that of Ubiquitin carboxyl-terminal hydrolase 37 (USP37) from Bos taurus (Bovine).